Here is a 177-residue protein sequence, read N- to C-terminus: MSRVAKAPVTVPAGVEVTLNEQTLTVKGSKGSLTRVINNAVNVVIEDAQVKFLPVDGVSNAWAQAGTARALVNNMVVGVSQGFVKKLKLVGVGYRAKIAGSDLDLTLGFSHPLVHKLPAGVTAECPSQTEIVLSGVDKQVVGQVAAEIRGYRPPEPYKGKGVRYDDEIVRRKEAKKK.

It belongs to the universal ribosomal protein uL6 family. Part of the 50S ribosomal subunit.

Functionally, this protein binds to the 23S rRNA, and is important in its secondary structure. It is located near the subunit interface in the base of the L7/L12 stalk, and near the tRNA binding site of the peptidyltransferase center. In Shewanella frigidimarina (strain NCIMB 400), this protein is Large ribosomal subunit protein uL6.